Reading from the N-terminus, the 266-residue chain is Glucosamine-6-phosphate deaminase (266 aa).

The active-site Proton acceptor; for enolization step is D72. D141 serves as the catalytic For ring-opening step. H143 functions as the Proton acceptor; for ring-opening step in the catalytic mechanism. E148 acts as the For ring-opening step in catalysis.

The protein belongs to the glucosamine/galactosamine-6-phosphate isomerase family. NagB subfamily. As to quaternary structure, homohexamer.

The catalysed reaction is alpha-D-glucosamine 6-phosphate + H2O = beta-D-fructose 6-phosphate + NH4(+). It participates in amino-sugar metabolism; N-acetylneuraminate degradation; D-fructose 6-phosphate from N-acetylneuraminate: step 5/5. With respect to regulation, allosterically activated by N-acetylglucosamine 6-phosphate (GlcNAc6P). Its function is as follows. Catalyzes the reversible isomerization-deamination of glucosamine 6-phosphate (GlcN6P) to form fructose 6-phosphate (Fru6P) and ammonium ion. The chain is Glucosamine-6-phosphate deaminase from Serratia proteamaculans (strain 568).